We begin with the raw amino-acid sequence, 307 residues long: 4-hydroxythreonine-4-phosphate dehydrogenase (307 aa).

Substrate-binding residues include histidine 126 and threonine 127. A divalent metal cation is bound by residues histidine 156, histidine 195, and histidine 251. 3 residues coordinate substrate: lysine 259, asparagine 268, and arginine 277.

Belongs to the PdxA family. As to quaternary structure, homodimer. Zn(2+) is required as a cofactor. Mg(2+) serves as cofactor. Requires Co(2+) as cofactor.

The protein resides in the cytoplasm. The enzyme catalyses 4-(phosphooxy)-L-threonine + NAD(+) = 3-amino-2-oxopropyl phosphate + CO2 + NADH. Its pathway is cofactor biosynthesis; pyridoxine 5'-phosphate biosynthesis; pyridoxine 5'-phosphate from D-erythrose 4-phosphate: step 4/5. Its function is as follows. Catalyzes the NAD(P)-dependent oxidation of 4-(phosphooxy)-L-threonine (HTP) into 2-amino-3-oxo-4-(phosphooxy)butyric acid which spontaneously decarboxylates to form 3-amino-2-oxopropyl phosphate (AHAP). The protein is 4-hydroxythreonine-4-phosphate dehydrogenase of Helicobacter pylori (strain Shi470).